The chain runs to 598 residues: Elongation factor 4 (598 aa).

Residues 2-183 (KNIRNFCIIA…AIINRVPAPS (182 aa)) enclose the tr-type G domain. GTP is bound by residues 14 to 19 (DHGKST) and 130 to 133 (NKVD).

Belongs to the TRAFAC class translation factor GTPase superfamily. Classic translation factor GTPase family. LepA subfamily.

Its subcellular location is the cell inner membrane. The catalysed reaction is GTP + H2O = GDP + phosphate + H(+). In terms of biological role, required for accurate and efficient protein synthesis under certain stress conditions. May act as a fidelity factor of the translation reaction, by catalyzing a one-codon backward translocation of tRNAs on improperly translocated ribosomes. Back-translocation proceeds from a post-translocation (POST) complex to a pre-translocation (PRE) complex, thus giving elongation factor G a second chance to translocate the tRNAs correctly. Binds to ribosomes in a GTP-dependent manner. The polypeptide is Elongation factor 4 (Christiangramia forsetii (strain DSM 17595 / CGMCC 1.15422 / KT0803) (Gramella forsetii)).